The following is a 152-amino-acid chain: HTH-type transcriptional regulator SlrR (152 aa).

One can recognise an HTH cro/C1-type domain in the interval 6–61 (IRLYRKRKGYSINQLAVESGVSKSYLSKIERGVHTNPSVQFLKKVSATLEVELTEL). The segment at residues 17–36 (INQLAVESGVSKSYLSKIER) is a DNA-binding region (H-T-H motif). The 39-residue stretch at 113-151 (YRNRKLTESNIEEWKALMAEAREIGLSVHEVKSFLKTKG) folds into the Sin domain.

Component of the SlrR/SlrA complex.

Represses sigma(D)-dependent flagellar genes and activate the eps and yqxM operons. Repressor activity is regulated by SlrA. Controls the initiation of biofilm formation. The polypeptide is HTH-type transcriptional regulator SlrR (slrR) (Bacillus subtilis (strain 168)).